The sequence spans 312 residues: Elongation factor Ts, mitochondrial (312 aa).

The protein belongs to the EF-Ts family.

The protein resides in the mitochondrion. In terms of biological role, associates with the EF-Tu.GDP complex and induces the exchange of GDP to GTP. It remains bound to the aminoacyl-tRNA.EF-Tu.GTP complex up to the GTP hydrolysis stage on the ribosome. The chain is Elongation factor Ts, mitochondrial (tsfm) from Xenopus laevis (African clawed frog).